The sequence spans 342 residues: Ribosomal RNA small subunit methyltransferase C (342 aa).

The protein belongs to the methyltransferase superfamily. RsmC family. In terms of assembly, monomer.

The protein localises to the cytoplasm. The enzyme catalyses guanosine(1207) in 16S rRNA + S-adenosyl-L-methionine = N(2)-methylguanosine(1207) in 16S rRNA + S-adenosyl-L-homocysteine + H(+). Its function is as follows. Specifically methylates the guanine in position 1207 of 16S rRNA in the 30S particle. The sequence is that of Ribosomal RNA small subunit methyltransferase C from Salmonella newport (strain SL254).